Here is an 840-residue protein sequence, read N- to C-terminus: Probable alpha-glucuronidase A (840 aa).

A signal peptide spans 1 to 19 (MWSGIPVFALLSSIGIAAA). N-linked (GlcNAc...) asparagine glycosylation is found at asparagine 50, asparagine 149, asparagine 222, asparagine 262, asparagine 279, asparagine 310, asparagine 465, asparagine 527, asparagine 576, asparagine 610, asparagine 682, asparagine 723, and asparagine 732.

It belongs to the glycosyl hydrolase 67 family.

Its subcellular location is the secreted. It carries out the reaction an alpha-D-glucuronoside + H2O = D-glucuronate + an alcohol. In terms of biological role, alpha-glucuronidase involved in the hydrolysis of xylan, a major structural heterogeneous polysaccharide found in plant biomass representing the second most abundant polysaccharide in the biosphere, after cellulose. Releases 4-O-methylglucuronic acid from xylan. The chain is Probable alpha-glucuronidase A (aguA) from Neosartorya fischeri (strain ATCC 1020 / DSM 3700 / CBS 544.65 / FGSC A1164 / JCM 1740 / NRRL 181 / WB 181) (Aspergillus fischerianus).